Reading from the N-terminus, the 141-residue chain is Relaxin-3 (141 aa).

Positions methionine 1–alanine 24 are cleaved as a signal peptide. Cystine bridges form between cysteine 34-cysteine 128, cysteine 46-cysteine 141, and cysteine 127-cysteine 132. Residues alanine 54–arginine 117 constitute a propeptide, connecting peptide.

It belongs to the insulin family. Heterodimer of a B chain and an A chain linked by two disulfide bonds. High expression in the brain localized to the pons/medulla with highest levels in pars ventromedialis of the dorsal tegmental nucleus. Significant expression is also detected in the spleen, thymus, lung, testis and ovary.

It is found in the secreted. Its function is as follows. May play a role in neuropeptide signaling processes. Ligand for LGR7, relaxin-3 receptor-1 and relaxin-3 receptor-2. This chain is Relaxin-3 (Rln3), found in Mus musculus (Mouse).